Here is a 536-residue protein sequence, read N- to C-terminus: Copine-1 (536 aa).

C2 domains follow at residues 1-113 (MAHC…TLPL) and 122-244 (GRGT…ECIH). 7 residues coordinate Ca(2+): Asp21, Asp27, Asp79, Asp81, Asp91, Asp152, and Asp158. Lys170 is subject to N6-acetyllysine. The Ca(2+) site is built by Asp213, Asp215, and Asp221. A VWFA domain is found at 282-484 (QINFTVGVDF…AARDIVQFVP (203 aa)).

This sequence belongs to the copine family. As to quaternary structure, homodimer; homodimerizes via its C2 domains. Interacts with p65/RELA (via N-terminus); this interaction induces proteolytic cleavage of p65/RELA subunit and inhibition of NF-kappa-B transcriptional activity. Interacts (via VWFA domain) with ACTB, CCDC22, MYCBP2, PPP5C, RDX and UBE2O. The cofactor is Ca(2+). As to expression, expressed in liver, brain, heart, intestine, kidney and lung (at protein level).

The protein localises to the nucleus. Its subcellular location is the cytoplasm. The protein resides in the cell membrane. Its function is as follows. Calcium-dependent phospholipid-binding protein that plays a role in calcium-mediated intracellular processes. Involved in the TNF-alpha receptor signaling pathway in a calcium-dependent manner. Exhibits calcium-dependent phospholipid binding properties. Plays a role in neuronal progenitor cell differentiation; induces neurite outgrowth via a AKT-dependent signaling cascade and calcium-independent manner. May recruit target proteins to the cell membrane in a calcium-dependent manner. May function in membrane trafficking. Involved in TNF-alpha-induced NF-kappa-B transcriptional repression by inducing endoprotease processing of the transcription factor NF-kappa-B p65/RELA subunit. Also induces endoprotease processing of NF-kappa-B p50/NFKB1, p52/NFKB2, RELB and REL. The chain is Copine-1 from Rattus norvegicus (Rat).